A 158-amino-acid chain; its full sequence is MHRAGAAVTANVWCRAGGIRMAPRPVIPVATQQRLRRQADRQSLGSSGLPALNCTPIRHTIDVMATKPERKTERLAARLTPEQDALIRRAAEAEGTDLTNFTVTAALAHARDVLADRRLFVLTDAAWTEFLAALDRPVSHKPRLEKLFAARSIFDTEG.

Belongs to the TacA antitoxin family. In terms of assembly, forms a complex with cognate toxin TacT.

Antitoxin component of a type II toxin-antitoxin (TA) system. Counteracts the toxic effect of cognate toxin TacT. Its function is as follows. TacA-TacT both represses and derepresses expression of its own operon. The polypeptide is Antitoxin TacA (Mycobacterium tuberculosis (strain ATCC 25618 / H37Rv)).